Consider the following 394-residue polypeptide: NAD(P)H-quinone oxidoreductase subunit H (394 aa).

It belongs to the complex I 49 kDa subunit family. As to quaternary structure, NDH-1 can be composed of about 15 different subunits; different subcomplexes with different compositions have been identified which probably have different functions.

The protein localises to the cellular thylakoid membrane. It catalyses the reaction a plastoquinone + NADH + (n+1) H(+)(in) = a plastoquinol + NAD(+) + n H(+)(out). It carries out the reaction a plastoquinone + NADPH + (n+1) H(+)(in) = a plastoquinol + NADP(+) + n H(+)(out). In terms of biological role, NDH-1 shuttles electrons from an unknown electron donor, via FMN and iron-sulfur (Fe-S) centers, to quinones in the respiratory and/or the photosynthetic chain. The immediate electron acceptor for the enzyme in this species is believed to be plastoquinone. Couples the redox reaction to proton translocation, and thus conserves the redox energy in a proton gradient. Cyanobacterial NDH-1 also plays a role in inorganic carbon-concentration. This chain is NAD(P)H-quinone oxidoreductase subunit H, found in Synechococcus sp. (strain JA-3-3Ab) (Cyanobacteria bacterium Yellowstone A-Prime).